The sequence spans 379 residues: Homoserine O-acetyltransferase (379 aa).

The AB hydrolase-1 domain maps to 52 to 356 (NVVMVLHALT…IRGHDGFLVE (305 aa)). The active-site Nucleophile is the S157. R227 is a substrate binding site. Active-site residues include D320 and H350. Residue D351 coordinates substrate.

It belongs to the AB hydrolase superfamily. MetX family. As to quaternary structure, homodimer.

Its subcellular location is the cytoplasm. The enzyme catalyses L-homoserine + acetyl-CoA = O-acetyl-L-homoserine + CoA. It functions in the pathway amino-acid biosynthesis; L-methionine biosynthesis via de novo pathway; O-acetyl-L-homoserine from L-homoserine: step 1/1. Its function is as follows. Transfers an acetyl group from acetyl-CoA to L-homoserine, forming acetyl-L-homoserine. This chain is Homoserine O-acetyltransferase, found in Mycobacterium marinum (strain ATCC BAA-535 / M).